Reading from the N-terminus, the 470-residue chain is Aromatic amino acid aminotransferase C569.07 (470 aa).

It belongs to the class-I pyridoxal-phosphate-dependent aminotransferase family. It depends on pyridoxal 5'-phosphate as a cofactor.

It is found in the cytoplasm. It carries out the reaction an aromatic L-alpha-amino acid + 2-oxoglutarate = an aromatic oxo-acid + L-glutamate. In terms of biological role, has aromatic amino acid transaminase activity. The sequence is that of Aromatic amino acid aminotransferase C569.07 from Schizosaccharomyces pombe (strain 972 / ATCC 24843) (Fission yeast).